The chain runs to 111 residues: Universal stress protein B (111 aa).

Transmembrane regions (helical) follow at residues 1–21 and 90–110; these read MIST…NMAR and FILT…LAIW.

This sequence belongs to the universal stress protein B family.

It localises to the cell inner membrane. This is Universal stress protein B from Erwinia tasmaniensis (strain DSM 17950 / CFBP 7177 / CIP 109463 / NCPPB 4357 / Et1/99).